The chain runs to 176 residues: ADP-ribosylation factor-like protein 11 (176 aa).

Residue G2 is the site of N-myristoyl glycine attachment. Residues 19–26, 63–67, and 122–125 contribute to the GTP site; these read GLDSAGKT, DIGGQ, and NKQE.

The protein belongs to the small GTPase superfamily. Arf family.

May play a role in apoptosis. May act as a tumor suppressor. The sequence is that of ADP-ribosylation factor-like protein 11 (Arl11) from Mus musculus (Mouse).